Consider the following 332-residue polypeptide: Ferredoxin--NADP reductase (332 aa).

Residues D33, Q41, Y46, A86, I121, D282, and S325 each contribute to the FAD site.

It belongs to the ferredoxin--NADP reductase type 2 family. As to quaternary structure, homodimer. Requires FAD as cofactor.

It catalyses the reaction 2 reduced [2Fe-2S]-[ferredoxin] + NADP(+) + H(+) = 2 oxidized [2Fe-2S]-[ferredoxin] + NADPH. In Metallosphaera sedula (strain ATCC 51363 / DSM 5348 / JCM 9185 / NBRC 15509 / TH2), this protein is Ferredoxin--NADP reductase.